The chain runs to 208 residues: MRDTMNLIPMVVEQSARGERSFDIFSRLLRERIIFLNGQVDDNSAALVCAQMLHLEAENPKKEIAFYINSPGGVVSSGFAIYDTMQFIKCPVATLCLGTAASMGSFLLMAGERGMRVALPNASIILHQPLGGFQGQASDIERHAQNVMRHKRRMIRLYAEHCGRAEEDVERTLDRDFFMTAEDAREWGLVDHVYRRRAGDLPLIAPSS.

S102 (nucleophile) is an active-site residue. Residue H127 is part of the active site.

The protein belongs to the peptidase S14 family. In terms of assembly, fourteen ClpP subunits assemble into 2 heptameric rings which stack back to back to give a disk-like structure with a central cavity, resembling the structure of eukaryotic proteasomes.

Its subcellular location is the cytoplasm. The catalysed reaction is Hydrolysis of proteins to small peptides in the presence of ATP and magnesium. alpha-casein is the usual test substrate. In the absence of ATP, only oligopeptides shorter than five residues are hydrolyzed (such as succinyl-Leu-Tyr-|-NHMec, and Leu-Tyr-Leu-|-Tyr-Trp, in which cleavage of the -Tyr-|-Leu- and -Tyr-|-Trp bonds also occurs).. Its function is as follows. Cleaves peptides in various proteins in a process that requires ATP hydrolysis. Has a chymotrypsin-like activity. Plays a major role in the degradation of misfolded proteins. The protein is ATP-dependent Clp protease proteolytic subunit 2 of Chelativorans sp. (strain BNC1).